The primary structure comprises 407 residues: Glucose-1-phosphate adenylyltransferase 2 (407 aa).

Alpha-D-glucose 1-phosphate-binding positions include tyrosine 97, glycine 162, 177–178, and serine 195; that span reads EK.

This sequence belongs to the bacterial/plant glucose-1-phosphate adenylyltransferase family. As to quaternary structure, homotetramer.

The catalysed reaction is alpha-D-glucose 1-phosphate + ATP + H(+) = ADP-alpha-D-glucose + diphosphate. Its pathway is glycan biosynthesis; glycogen biosynthesis. Functionally, involved in the biosynthesis of ADP-glucose, a building block required for the elongation reactions to produce glycogen. Catalyzes the reaction between ATP and alpha-D-glucose 1-phosphate (G1P) to produce pyrophosphate and ADP-Glc. The polypeptide is Glucose-1-phosphate adenylyltransferase 2 (Vibrio cholerae serotype O1 (strain ATCC 39315 / El Tor Inaba N16961)).